The chain runs to 403 residues: cAMP-dependent protein kinase regulatory subunit (403 aa).

The interval 1 to 155 (MADYTIPSEL…RIQASIGNNF (155 aa)) is dimerization and phosphorylation. The interval 79–125 (YAYSTDDGFGTEDDDDDDDDEDDEAAIPPPVVNRGRRTSVSAESMAP) is disordered. A compositionally biased stretch (acidic residues) spans 87 to 103 (FGTEDDDDDDDDEDDEA). S117 carries the post-translational modification Phosphoserine. Residues 156-278 (LFRN…EEVP), E226, R235, 279-403 (LLSS…PGEH), E349, and R358 each bind 3',5'-cyclic AMP.

Belongs to the cAMP-dependent kinase regulatory chain family. As to quaternary structure, tetramer, composed of 2 regulatory (R) and 2 catalytic (C) subunits. In the presence of cAMP it dissociates into 2 active monomeric C subunits and an R dimer that binds four cAMP molecules.

This is cAMP-dependent protein kinase regulatory subunit (PKAR) from Blastocladiella emersonii (Aquatic fungus).